The primary structure comprises 1218 residues: Protein dispatched (1218 aa).

The helical transmembrane segment at 21-41 threads the bilayer; the sequence is YLVVVSIAVYCVACIIVALVL. Positions 99–135 are disordered; it reads VETKLHPNHRRRKNKHKNRNKNKRRKEQNQSSHEHHD. A compositionally biased stretch (basic residues) spans 104–124; the sequence is HPNHRRRKNKHKNRNKNKRRK. 6 N-linked (GlcNAc...) asparagine glycosylation sites follow: Asn127, Asn176, Asn197, Asn264, Asn319, and Asn388. The SSD domain occupies 430–624; sequence AMDLGLENEL…ITWLPASVSI (195 aa). A run of 6 helical transmembrane segments spans residues 443 to 463, 473 to 493, 504 to 524, 570 to 590, 598 to 618, and 670 to 690; these read LLLT…ASVW, LMSC…YAIV, LLAV…FLKI, AAAS…ASYS, CFGI…ITWL, and AYLW…IVFW. 3 N-linked (GlcNAc...) asparagine glycosylation sites follow: Asn767, Asn883, and Asn891. Transmembrane regions (helical) follow at residues 975 to 995, 996 to 1016, 1019 to 1039, 1058 to 1078, and 1087 to 1107; these read LAVL…VLTV, SLSI…LNIL, IAVS…GIHY, IIGP…IMMA, and IGVF…FFLM.

This sequence belongs to the dispatched family.

It is found in the membrane. Segment polarity protein which functions in hedgehog (Hh) signaling. Regulates the trafficking and the release of cholesterol-modified hedgehog protein from cells of the posterior compartment (P cells) and is hence required for the effective production of the Hh signal. The sequence is that of Protein dispatched (disp) from Drosophila melanogaster (Fruit fly).